The sequence spans 66 residues: Sodium channel alpha-toxin Acra8 (66 aa).

The LCN-type CS-alpha/beta domain maps to 2–64; it reads RDGYIVDDKN…VPIKEKGRCN (63 aa). Cystine bridges form between Cys12–Cys63, Cys16–Cys36, Cys22–Cys46, and Cys26–Cys48. Asparagine amide is present on Asn64. The propeptide occupies 65–66; the sequence is GR.

The protein belongs to the long (4 C-C) scorpion toxin superfamily. Sodium channel inhibitor family. Alpha subfamily. Expressed by the venom gland.

The protein resides in the secreted. Its function is as follows. Alpha toxins bind voltage-independently at site-3 of sodium channels (Nav) and inhibit the inactivation of the activated channels, thereby blocking neuronal transmission. The chain is Sodium channel alpha-toxin Acra8 from Androctonus crassicauda (Arabian fat-tailed scorpion).